Consider the following 430-residue polypeptide: Uric acid permease PucK (430 aa).

14 consecutive transmembrane segments (helical) span residues 18–38 (MLAM…AIGL), 43–63 (LTYL…LQLW), 67–87 (YFGI…GPMI), 97–117 (AIYG…GFFG), 122–142 (FFPP…LIPT), 163–183 (LLGF…KGFI), 185–205 (SIAI…MGKV), 209–229 (EVLE…PPTF), 233–253 (AVVT…GVYF), 274–294 (AEGL…TAFS), 310–330 (VIAI…AAAL), 333–353 (VIPT…VISY), 369–389 (LLII…PALF), and 398–418 (VLAG…HAFF).

It belongs to the nucleobase:cation symporter-2 (NCS2) (TC 2.A.40) family.

It is found in the cell membrane. Uptake of uric acid. This Bacillus subtilis (strain 168) protein is Uric acid permease PucK (pucK).